The primary structure comprises 251 residues: Hydroxyacylglutathione hydrolase (251 aa).

Zn(2+) is bound by residues histidine 53, histidine 55, aspartate 57, histidine 58, histidine 110, aspartate 127, and histidine 165.

This sequence belongs to the metallo-beta-lactamase superfamily. Glyoxalase II family. As to quaternary structure, monomer. Zn(2+) serves as cofactor.

It carries out the reaction an S-(2-hydroxyacyl)glutathione + H2O = a 2-hydroxy carboxylate + glutathione + H(+). Its pathway is secondary metabolite metabolism; methylglyoxal degradation; (R)-lactate from methylglyoxal: step 2/2. Functionally, thiolesterase that catalyzes the hydrolysis of S-D-lactoyl-glutathione to form glutathione and D-lactic acid. This chain is Hydroxyacylglutathione hydrolase, found in Escherichia coli O81 (strain ED1a).